A 425-amino-acid chain; its full sequence is MSVIIDIHAREILDSRGNPTVEVDVTLEDGTMGRAAVPSGASTGAYEAVEKRDGDKARYKGKGVLAAVEAVNGEIADTLVGFDATEQVAIDQTMCELDGTDNKGRLGANAILGVSLATAKAAADFTAQPLYRYVGGTMAHVLPVPMMNIINGGEHADNPIDIQEFMIMPVSATSIAEAVRMGSEVFHTLKSELSAAGLSTGIGDEGGFAPNLSSTRDALDFVLKSIEKAGYAPGDDMVLALDCAATEYYRDGKYELSGEGKSLTSDENVAYLAALVANYPIFSIEDGMGEDDWDGWIALTEALGDKVQLVGDDLFVTNPARLKDGIDRKAANSLLVKVNQIGTLTETLAAVNMATRAGFTSVMSHRSGETEDATIADLAVATNCGQIKTGSLARSDRLAKYNQLIRIEEQLEETANFAGRSILRG.

Residue Q163 participates in (2R)-2-phosphoglycerate binding. E205 (proton donor) is an active-site residue. D242, E285, and D312 together coordinate Mg(2+). (2R)-2-phosphoglycerate is bound by residues K337, R366, S367, and K388. K337 (proton acceptor) is an active-site residue.

The protein belongs to the enolase family. It depends on Mg(2+) as a cofactor.

It is found in the cytoplasm. The protein localises to the secreted. The protein resides in the cell surface. The enzyme catalyses (2R)-2-phosphoglycerate = phosphoenolpyruvate + H2O. It functions in the pathway carbohydrate degradation; glycolysis; pyruvate from D-glyceraldehyde 3-phosphate: step 4/5. Catalyzes the reversible conversion of 2-phosphoglycerate (2-PG) into phosphoenolpyruvate (PEP). It is essential for the degradation of carbohydrates via glycolysis. In Jannaschia sp. (strain CCS1), this protein is Enolase.